The primary structure comprises 320 residues: Nucleotide-binding protein Acid_7395 (320 aa).

A disordered region spans residues 1-34 (MPLRKKGAATTKAAATRKDSAKAPASSKRKDAPQ). Position 44-51 (44-51 (GLSGSGKG)) interacts with ATP. 94-97 (DIRE) is a binding site for GTP.

Belongs to the RapZ-like family.

In terms of biological role, displays ATPase and GTPase activities. The polypeptide is Nucleotide-binding protein Acid_7395 (Solibacter usitatus (strain Ellin6076)).